Reading from the N-terminus, the 156-residue chain is Small ribosomal subunit protein bS16 (156 aa).

Residues Glu-114 to Lys-156 form a disordered region. Over residues Ala-130–Asp-139 the composition is skewed to basic and acidic residues. Positions Asp-143 to Lys-156 are enriched in low complexity.

This sequence belongs to the bacterial ribosomal protein bS16 family.

The polypeptide is Small ribosomal subunit protein bS16 (Rhodococcus erythropolis (strain PR4 / NBRC 100887)).